We begin with the raw amino-acid sequence, 1022 residues long: Protein trachealess (1022 aa).

The 54-residue stretch at 86-139 folds into the bHLH domain; the sequence is LRKEKSRDAARSRRGKENYEFYELAKMLPLPAAITSQLDKASIIRLTISYLKLR. Residues 174 to 244 form the PAS 1 domain; sequence EQHQGTHILQ…DQLGLSLTSG (71 aa). The interval 239–289 is disordered; the sequence is LSLTSGGGGGGGSSSSGGGGGGAGGGMASPTSGASDDGSGTHGTNNPDVAA. Gly residues predominate over residues 243–265; that stretch reads SGGGGGGGSSSSGGGGGGAGGGM. A compositionally biased stretch (polar residues) spans 280 to 289; sequence HGTNNPDVAA. The region spanning 391–461 is the PAS 2 domain; it reads PPPSVHEIRL…KSHSDLIEKG (71 aa). Residues 465 to 508 enclose the PAC domain; sequence TGYYRLMNKSGGYTWLQTCATVVCSTKNADEQNIICVNYVISNR. Disordered regions lie at residues 525-686, 849-896, and 962-996; these read DSIK…ADSA, AMTP…GDVV, and DDQG…ASQA. Composition is skewed to low complexity over residues 578–587 and 611–625; these read RSAAASHGSS and PTTV…TPPV. Residues 629–636 carry the Nuclear localization signal motif; sequence KRKRKTKA. Residue serine 673 is modified to Phosphoserine; by PKB/Akt1. The segment covering 851–864 has biased composition (polar residues); sequence TPPSSVSPRDSNQP. The span at 987 to 996 shows a compositional bias: low complexity; it reads GSAGSSASQA.

Efficient DNA binding requires dimerization with another bHLH protein. Heterodimer with tgo. Ser-673 phosphorylation by PKB/Akt1 is required for nuclear targeting and transcriptional activity. In terms of tissue distribution, trachea, salivary gland ducts, posterior spiracles (Filzkoeper primordia) and a subset of cells in the CNS.

The protein resides in the nucleus. Functionally, transcription factor, master regulator of tracheal cell fates in the embryo, necessary for the development of the salivary gland duct, Malpighian tubules and the posterior spiracles. It may induce a general fate of branched tubular structures of epithelial origin. Functions with tgo to regulate expression of btl. This Drosophila melanogaster (Fruit fly) protein is Protein trachealess (trh).